Reading from the N-terminus, the 387-residue chain is S-adenosylmethionine synthase (387 aa).

ATP is bound at residue His17. Asp19 lines the Mg(2+) pocket. Glu45 is a binding site for K(+). Residues Glu58 and Gln101 each contribute to the L-methionine site. The tract at residues 101–111 (QSADIAMGVDA) is flexible loop. ATP-binding positions include 166-168 (DAK), 231-232 (RF), Asp240, 246-247 (RK), Ala263, and Lys267. Asp240 contacts L-methionine. Lys271 is an L-methionine binding site.

Belongs to the AdoMet synthase family. Homotetramer; dimer of dimers. Mg(2+) serves as cofactor. It depends on K(+) as a cofactor.

It is found in the cytoplasm. It carries out the reaction L-methionine + ATP + H2O = S-adenosyl-L-methionine + phosphate + diphosphate. The protein operates within amino-acid biosynthesis; S-adenosyl-L-methionine biosynthesis; S-adenosyl-L-methionine from L-methionine: step 1/1. Its function is as follows. Catalyzes the formation of S-adenosylmethionine (AdoMet) from methionine and ATP. The overall synthetic reaction is composed of two sequential steps, AdoMet formation and the subsequent tripolyphosphate hydrolysis which occurs prior to release of AdoMet from the enzyme. The sequence is that of S-adenosylmethionine synthase from Rhodospirillum centenum (strain ATCC 51521 / SW).